The chain runs to 310 residues: Ribosomal RNA small subunit methyltransferase H (310 aa).

Residues 33–35, Asp52, Phe79, Asp98, and Gln105 contribute to the S-adenosyl-L-methionine site; that span reads GGH.

It belongs to the methyltransferase superfamily. RsmH family.

The protein localises to the cytoplasm. The catalysed reaction is cytidine(1402) in 16S rRNA + S-adenosyl-L-methionine = N(4)-methylcytidine(1402) in 16S rRNA + S-adenosyl-L-homocysteine + H(+). Functionally, specifically methylates the N4 position of cytidine in position 1402 (C1402) of 16S rRNA. This Campylobacter jejuni subsp. jejuni serotype O:23/36 (strain 81-176) protein is Ribosomal RNA small subunit methyltransferase H.